We begin with the raw amino-acid sequence, 570 residues long: Fibropellin-3 (570 aa).

The first 17 residues, methionine 1 to threonine 17, serve as a signal peptide directing secretion. The EGF-like 1 domain maps to tyrosine 18 to aspartate 55. Disulfide bonds link cysteine 23-cysteine 34, cysteine 28-cysteine 43, cysteine 45-cysteine 54, and cysteine 62-cysteine 88. N-linked (GlcNAc...) asparagine glycosylation occurs at asparagine 30. Residues cysteine 62 to serine 175 enclose the CUB domain. Asparagine 136 is a glycosylation site (N-linked (GlcNAc...) asparagine). In terms of domain architecture, EGF-like 2; calcium-binding spans aspartate 176–glutamate 212. 22 disulfides stabilise this stretch: cysteine 180/cysteine 191, cysteine 185/cysteine 200, cysteine 202/cysteine 211, cysteine 218/cysteine 229, cysteine 223/cysteine 238, cysteine 240/cysteine 249, cysteine 256/cysteine 267, cysteine 261/cysteine 276, cysteine 278/cysteine 287, cysteine 294/cysteine 305, cysteine 299/cysteine 314, cysteine 316/cysteine 325, cysteine 332/cysteine 343, cysteine 337/cysteine 352, cysteine 354/cysteine 363, cysteine 370/cysteine 381, cysteine 375/cysteine 390, cysteine 392/cysteine 401, cysteine 408/cysteine 419, cysteine 413/cysteine 428, cysteine 430/cysteine 439, and cysteine 445/cysteine 521. Positions aspartate 214–glutamate 250 constitute an EGF-like 3; calcium-binding domain. The EGF-like 4; calcium-binding domain maps to asparagine 252 to glutamate 288. The EGF-like 5; calcium-binding domain occupies aspartate 290–glutamate 326. In terms of domain architecture, EGF-like 6; calcium-binding spans asparagine 328–glutamate 364. The N-linked (GlcNAc...) asparagine glycan is linked to asparagine 357. An EGF-like 7 domain is found at serine 366–glutamate 402. An EGF-like 8; calcium-binding domain is found at aspartate 404 to glutamate 440. Residues glycine 443–glutamine 562 enclose the Avidin-like domain.

In terms of assembly, homotetramer.

The protein resides in the secreted. It localises to the extracellular space. Functionally, forms the apical lamina, a component of the extracellular matrix. In Strongylocentrotus purpuratus (Purple sea urchin), this protein is Fibropellin-3 (EGF3).